The chain runs to 154 residues: Putative pre-16S rRNA nuclease (154 aa).

It belongs to the YqgF nuclease family.

The protein resides in the cytoplasm. Functionally, could be a nuclease involved in processing of the 5'-end of pre-16S rRNA. The polypeptide is Putative pre-16S rRNA nuclease (Rickettsia felis (strain ATCC VR-1525 / URRWXCal2) (Rickettsia azadi)).